The following is a 429-amino-acid chain: Histidine--tRNA ligase (429 aa).

This sequence belongs to the class-II aminoacyl-tRNA synthetase family. Homodimer.

The protein localises to the cytoplasm. The enzyme catalyses tRNA(His) + L-histidine + ATP = L-histidyl-tRNA(His) + AMP + diphosphate + H(+). This chain is Histidine--tRNA ligase, found in Alkalilimnicola ehrlichii (strain ATCC BAA-1101 / DSM 17681 / MLHE-1).